Reading from the N-terminus, the 251-residue chain is Segregation and condensation protein A (251 aa).

Belongs to the ScpA family. As to quaternary structure, component of a cohesin-like complex composed of ScpA, ScpB and the Smc homodimer, in which ScpA and ScpB bind to the head domain of Smc. The presence of the three proteins is required for the association of the complex with DNA.

Its subcellular location is the cytoplasm. Participates in chromosomal partition during cell division. May act via the formation of a condensin-like complex containing Smc and ScpB that pull DNA away from mid-cell into both cell halves. The sequence is that of Segregation and condensation protein A from Bacillus velezensis (strain DSM 23117 / BGSC 10A6 / LMG 26770 / FZB42) (Bacillus amyloliquefaciens subsp. plantarum).